Consider the following 489-residue polypeptide: Probable transporter MCH1 (489 aa).

A run of 12 helical transmembrane segments spans residues 34–54, 68–88, 94–114, 124–144, 156–175, 196–216, 262–282, 302–324, 335–355, 359–379, 403–423, and 463–483; these read ISLI…FTPV, IIGS…GYLA, VLLS…AATV, LAIS…TALL, LTIS…GSRV, FSFL…VVSI, ISTY…EMYI, VAIH…DFLV, LLSI…STFV, YYII…LYPT, IGST…CGVF, and SLII…ILRI.

This sequence belongs to the major facilitator superfamily.

It is found in the vacuole membrane. In terms of biological role, probable transporter. In Wickerhamomyces anomalus (Yeast), this protein is Probable transporter MCH1 (MCH1).